A 170-amino-acid polypeptide reads, in one-letter code: Protein BofC (170 aa).

Residues 1–30 (MKRFSTAYLLLGILCSAAVFLIGAPSRALG) form the signal peptide.

As to quaternary structure, monomer.

It is found in the forespore intermembrane space. Functionally, inhibits the SpoIVB zymogen from undergoing autocatalytic activation by an unknown mechanism, and in this way plays a role in the sigma-K checkpoint of sporulation. This Bacillus subtilis (strain 168) protein is Protein BofC (bofC).